The primary structure comprises 338 residues: Phenylalanine--tRNA ligase alpha subunit (338 aa).

Glutamate 252 contacts Mg(2+).

Belongs to the class-II aminoacyl-tRNA synthetase family. Phe-tRNA synthetase alpha subunit type 1 subfamily. As to quaternary structure, tetramer of two alpha and two beta subunits. It depends on Mg(2+) as a cofactor.

It localises to the cytoplasm. It catalyses the reaction tRNA(Phe) + L-phenylalanine + ATP = L-phenylalanyl-tRNA(Phe) + AMP + diphosphate + H(+). This chain is Phenylalanine--tRNA ligase alpha subunit, found in Pseudomonas fluorescens (strain Pf0-1).